Reading from the N-terminus, the 85-residue chain is Cell division topological specificity factor (85 aa).

It belongs to the MinE family.

Its function is as follows. Prevents the cell division inhibition by proteins MinC and MinD at internal division sites while permitting inhibition at polar sites. This ensures cell division at the proper site by restricting the formation of a division septum at the midpoint of the long axis of the cell. This chain is Cell division topological specificity factor, found in Xylella fastidiosa (strain M12).